We begin with the raw amino-acid sequence, 88 residues long: Putative membrane protein insertion efficiency factor (88 aa).

The tract at residues 65–88 (LDFVPPKKDKNDDSGHTCKAHHHH) is disordered. Residues 69-80 (PPKKDKNDDSGH) are compositionally biased toward basic and acidic residues.

The protein belongs to the UPF0161 family.

Its subcellular location is the cell membrane. Its function is as follows. Could be involved in insertion of integral membrane proteins into the membrane. The sequence is that of Putative membrane protein insertion efficiency factor from Listeria innocua serovar 6a (strain ATCC BAA-680 / CLIP 11262).